The chain runs to 72 residues: Translation initiation factor IF-1 (72 aa).

An S1-like domain is found at methionine 1–lysine 72.

It belongs to the IF-1 family. In terms of assembly, component of the 30S ribosomal translation pre-initiation complex which assembles on the 30S ribosome in the order IF-2 and IF-3, IF-1 and N-formylmethionyl-tRNA(fMet); mRNA recruitment can occur at any time during PIC assembly.

It localises to the cytoplasm. In terms of biological role, one of the essential components for the initiation of protein synthesis. Stabilizes the binding of IF-2 and IF-3 on the 30S subunit to which N-formylmethionyl-tRNA(fMet) subsequently binds. Helps modulate mRNA selection, yielding the 30S pre-initiation complex (PIC). Upon addition of the 50S ribosomal subunit IF-1, IF-2 and IF-3 are released leaving the mature 70S translation initiation complex. The sequence is that of Translation initiation factor IF-1 from Parvibaculum lavamentivorans (strain DS-1 / DSM 13023 / NCIMB 13966).